Here is a 398-residue protein sequence, read N- to C-terminus: Vacuolar protease A (398 aa).

The N-terminal stretch at 1 to 18 is a signal peptide; it reads MKSTSLLTASVLLGSASA. Residues 19–70 constitute a propeptide, activation peptide; it reads AVHKLKLNKVPLDEQLYTHNIDAHVRALGQKYMGIRPNVHQELLEENSLNDM. Positions 85–395 constitute a Peptidase A1 domain; that stretch reads YFSEISLGTP…DLGNNAVGLA (311 aa). Asp-103 is an active-site residue. Cys-116 and Cys-121 form a disulfide bridge. N-linked (GlcNAc...) asparagine glycosylation occurs at Asn-138. Asp-287 is a catalytic residue. Cys-321 and Cys-354 form a disulfide bridge. Residue Asn-338 is glycosylated (N-linked (GlcNAc...) asparagine).

Belongs to the peptidase A1 family.

Its subcellular location is the vacuole lumen. It is found in the secreted. It catalyses the reaction Hydrolysis of proteins with broad specificity for peptide bonds. Cleaves -Leu-Leu-|-Val-Tyr- bond in a synthetic substrate. Does not act on esters of Tyr or Arg.. Vacuolar aspartic endopeptidase which is probably also secreted and contributes to virulence. In Aspergillus fumigatus (strain ATCC MYA-4609 / CBS 101355 / FGSC A1100 / Af293) (Neosartorya fumigata), this protein is Vacuolar protease A (pep2).